A 725-amino-acid polypeptide reads, in one-letter code: Phosphatase and actin regulator 4A (725 aa).

The span at 1-12 (MGQGASTQTLNP) shows a compositional bias: polar residues. The disordered stretch occupies residues 1–597 (MGQGASTQTL…SSTWNNKEQW (597 aa)). The span at 55 to 64 (KPWKWRKKKT) shows a compositional bias: basic residues. Basic and acidic residues-rich tracts occupy residues 65 to 100 (SDKF…KDIP), 124 to 147 (GDRK…GERK), and 155 to 164 (KRNDGTERMT). Residues 75 to 100 (LVLERKMSVRKPREELIERGLLKDIP) form an RPEL 1 repeat. Polar residues predominate over residues 166–177 (MIQSFQKMSLMQ). The segment covering 212–221 (VIAAPSSAEP) has biased composition (low complexity). A compositionally biased stretch (pro residues) spans 222–235 (APVPPPPIAKPPPR). 2 stretches are compositionally biased toward low complexity: residues 265-276 (PAHTTPATVSTH) and 292-313 (PAHV…LLKQ). A compositionally biased stretch (polar residues) spans 359–368 (TPVTKRNSGD). Positions 374–384 (PEPPPPAPTSV) are enriched in pro residues. Over residues 385-401 (PIPAAAPISAPPSTQSD) the composition is skewed to low complexity. Pro residues predominate over residues 402–417 (PPSPTTEPPSQPPPLP). Over residues 497–510 (QKPELEPRSRRGLV) the composition is skewed to basic and acidic residues. 2 stretches are compositionally biased toward acidic residues: residues 522 to 536 (AGSE…ESDS) and 545 to 554 (DNEEDDDEED). Over residues 567 to 585 (KDTLALKLERQQEKEKSQE) the composition is skewed to basic and acidic residues. 2 RPEL repeats span residues 606-631 (TALT…LAKN) and 644-669 (RRLT…RFHE).

The protein belongs to the phosphatase and actin regulator family. Binds ppp1ca and actin.

It localises to the cytoplasm. Its subcellular location is the cell projection. The protein resides in the lamellipodium. Regulator of protein phosphatase 1 (PP1) required for neural tube and optic fissure closure, and enteric neural crest cell (ENCCs) migration during development. Acts as an activator of PP1. During neural tube closure, localizes to the ventral neural tube and activates PP1, leading to down-regulate cell proliferation within cranial neural tissue and the neural retina. Also acts as a regulator of migration of enteric neural crest cells (ENCCs) by activating PP1, leading to repression of the integrin signaling through the rho/rock pathway. In Danio rerio (Zebrafish), this protein is Phosphatase and actin regulator 4A (phactr4a).